The primary structure comprises 498 residues: ATP synthase subunit beta, chloroplastic (498 aa).

172 to 179 lines the ATP pocket; the sequence is GGAGVGKT.

The protein belongs to the ATPase alpha/beta chains family. F-type ATPases have 2 components, CF(1) - the catalytic core - and CF(0) - the membrane proton channel. CF(1) has five subunits: alpha(3), beta(3), gamma(1), delta(1), epsilon(1). CF(0) has four main subunits: a(1), b(1), b'(1) and c(9-12).

It is found in the plastid. Its subcellular location is the chloroplast thylakoid membrane. It carries out the reaction ATP + H2O + 4 H(+)(in) = ADP + phosphate + 5 H(+)(out). Functionally, produces ATP from ADP in the presence of a proton gradient across the membrane. The catalytic sites are hosted primarily by the beta subunits. The polypeptide is ATP synthase subunit beta, chloroplastic (Spinacia oleracea (Spinach)).